The following is a 232-amino-acid chain: UPF0758 protein FN0909 (232 aa).

The MPN domain maps to 110 to 232; sequence KISNKDILLK…YFSFLEEGLI (123 aa). H181, H183, and D194 together coordinate Zn(2+). The JAMM motif signature appears at 181 to 194; the sequence is HNHPSDNITPSKSD.

It belongs to the UPF0758 family.

The protein is UPF0758 protein FN0909 of Fusobacterium nucleatum subsp. nucleatum (strain ATCC 25586 / DSM 15643 / BCRC 10681 / CIP 101130 / JCM 8532 / KCTC 2640 / LMG 13131 / VPI 4355).